We begin with the raw amino-acid sequence, 316 residues long: Ribosomal RNA small subunit methyltransferase H (316 aa).

Residues 35–37 (GGH), Asp55, Phe80, Asp102, and Gln109 contribute to the S-adenosyl-L-methionine site.

Belongs to the methyltransferase superfamily. RsmH family.

It localises to the cytoplasm. It carries out the reaction cytidine(1402) in 16S rRNA + S-adenosyl-L-methionine = N(4)-methylcytidine(1402) in 16S rRNA + S-adenosyl-L-homocysteine + H(+). Functionally, specifically methylates the N4 position of cytidine in position 1402 (C1402) of 16S rRNA. This is Ribosomal RNA small subunit methyltransferase H from Colwellia psychrerythraea (strain 34H / ATCC BAA-681) (Vibrio psychroerythus).